We begin with the raw amino-acid sequence, 89 residues long: Small ribosomal subunit protein uS15 (89 aa).

The protein belongs to the universal ribosomal protein uS15 family. Part of the 30S ribosomal subunit. Forms a bridge to the 50S subunit in the 70S ribosome, contacting the 23S rRNA.

In terms of biological role, one of the primary rRNA binding proteins, it binds directly to 16S rRNA where it helps nucleate assembly of the platform of the 30S subunit by binding and bridging several RNA helices of the 16S rRNA. Functionally, forms an intersubunit bridge (bridge B4) with the 23S rRNA of the 50S subunit in the ribosome. The chain is Small ribosomal subunit protein uS15 from Sinorhizobium medicae (strain WSM419) (Ensifer medicae).